Here is a 184-residue protein sequence, read N- to C-terminus: NADH-quinone oxidoreductase subunit B (184 aa).

The [4Fe-4S] cluster site is built by Cys-37, Cys-38, Cys-103, and Cys-132.

The protein belongs to the complex I 20 kDa subunit family. As to quaternary structure, NDH-1 is composed of 14 different subunits. Subunits NuoB, C, D, E, F, and G constitute the peripheral sector of the complex. [4Fe-4S] cluster is required as a cofactor.

Its subcellular location is the cell membrane. The enzyme catalyses a quinone + NADH + 5 H(+)(in) = a quinol + NAD(+) + 4 H(+)(out). Functionally, NDH-1 shuttles electrons from NADH, via FMN and iron-sulfur (Fe-S) centers, to quinones in the respiratory chain. The immediate electron acceptor for the enzyme in this species is believed to be a menaquinone. Couples the redox reaction to proton translocation (for every two electrons transferred, four hydrogen ions are translocated across the cytoplasmic membrane), and thus conserves the redox energy in a proton gradient. The polypeptide is NADH-quinone oxidoreductase subunit B (Rhodococcus jostii (strain RHA1)).